We begin with the raw amino-acid sequence, 214 residues long: Rac-like GTP-binding protein 2 (214 aa).

A GTP-binding site is contributed by 14–21; sequence GDGAVGKT. The short motif at 36–44 is the Effector region element; the sequence is YIPTVFDNF. Residues 61-65 and 119-122 contribute to the GTP site; these read DTAGQ and TKLD.

The protein belongs to the small GTPase superfamily. Rho family. Post-translationally, may be palmitoylated.

It localises to the cytoplasm. The protein resides in the membrane. Its function is as follows. Inactive GDP-bound Rho GTPases reside in the cytosol, are found in a complex with Rho GDP-dissociation inhibitors (Rho GDIs), and are released from the GDI protein in order to translocate to membranes upon activation. In Oryza sativa subsp. japonica (Rice), this protein is Rac-like GTP-binding protein 2 (RAC2).